Here is a 191-residue protein sequence, read N- to C-terminus: Probable GTP-binding protein EngB (191 aa).

An EngB-type G domain is found at 22-191; it reads DFDHFLILGR…KLINEEFSNE (170 aa). GTP-binding positions include 30 to 37, 57 to 61, 75 to 78, 142 to 145, and 172 to 174; these read GRSNVGKS, GKTIT, DAPG, TKYD, and TSS. Residues serine 37 and threonine 59 each coordinate Mg(2+).

Belongs to the TRAFAC class TrmE-Era-EngA-EngB-Septin-like GTPase superfamily. EngB GTPase family. Mg(2+) serves as cofactor.

Its function is as follows. Necessary for normal cell division and for the maintenance of normal septation. This is Probable GTP-binding protein EngB from Acholeplasma laidlawii (strain PG-8A).